Consider the following 448-residue polypeptide: MSDNVPTIAAVATAPGRGGVGVIRISGKNLLPMAQALCGKTPKPRVATYADFTDEDGQAIDSGLLLFFAAPASFTGEDVIELQGHGGPVVMDMLLNRCLELGARLAEPGEFTKRAFLNDKLDLAQAEGVADLIDASSRSAARLALRSLKGDFSRRIHGLVEDLITLRMLVEATLDFPEEDIDFLEAADARGKLDGLRRAVDDVLANAQQGAILREGLNVVLVGAPNVGKSSLLNALAGDEVAIVTDIAGTTRDAVRERILIDGVPVHIVDTAGLRETDDVVERIGIERSRKAVSEADVALVLVDPREGLNEKTRAILDALPLELKRIEIHSKSDLHAHAAGGFGTGAETVIALSAKTGDGLDALKRTLLREAGWQGESEGLFLARTRHVNALKAAQEELSLAALCGNHQIELFAEHLRLAQVACGEITGEFTADDLLGVIFSRFCIGK.

(6S)-5-formyl-5,6,7,8-tetrahydrofolate contacts are provided by R24, E81, and K120. Residues 216 to 373 form the TrmE-type G domain; the sequence is GLNVVLVGAP…LKRTLLREAG (158 aa). N226 provides a ligand contact to K(+). Residues 226–231, 245–251, and 270–273 contribute to the GTP site; these read NVGKSS, TDIAGTT, and DTAG. S230 is a Mg(2+) binding site. K(+) is bound by residues T245, I247, and T250. T251 contacts Mg(2+). K448 is a (6S)-5-formyl-5,6,7,8-tetrahydrofolate binding site.

It belongs to the TRAFAC class TrmE-Era-EngA-EngB-Septin-like GTPase superfamily. TrmE GTPase family. Homodimer. Heterotetramer of two MnmE and two MnmG subunits. It depends on K(+) as a cofactor.

Its subcellular location is the cytoplasm. In terms of biological role, exhibits a very high intrinsic GTPase hydrolysis rate. Involved in the addition of a carboxymethylaminomethyl (cmnm) group at the wobble position (U34) of certain tRNAs, forming tRNA-cmnm(5)s(2)U34. In Neisseria meningitidis serogroup A / serotype 4A (strain DSM 15465 / Z2491), this protein is tRNA modification GTPase MnmE.